We begin with the raw amino-acid sequence, 309 residues long: uncharacterized protein (309 aa).

The HTH lysR-type domain maps to 1–60 (MKPLLDVLMILDALEKEGSFAAASAKLYKTPSALSYTVHKLESDLNIQLLDRSGHRAKFT). A DNA-binding region (H-T-H motif) is located at residues 20-39 (FAAASAKLYKTPSALSYTVH).

It belongs to the LysR transcriptional regulatory family.

This is an uncharacterized protein from Escherichia coli (strain K12).